We begin with the raw amino-acid sequence, 1072 residues long: Carbamoyl phosphate synthase large chain (1072 aa).

Residues 1 to 401 form a carboxyphosphate synthetic domain region; the sequence is MPKRLDINTI…SLLKAVRSLE (401 aa). ATP contacts are provided by arginine 129, arginine 169, glycine 175, glycine 176, lysine 208, isoleucine 210, glutamate 215, glycine 241, valine 242, histidine 243, glutamine 284, and glutamate 298. Residues 133-327 form the ATP-grasp 1 domain; that stretch reads RTLMQELNEP…IAKLAAKIAV (195 aa). Residues glutamine 284, glutamate 298, and asparagine 300 each coordinate Mg(2+). Mn(2+) is bound by residues glutamine 284, glutamate 298, and asparagine 300. An oligomerization domain region spans residues 402–546; sequence LGIYHLELNH…YSTYGDENES (145 aa). Residues 547 to 929 form a carbamoyl phosphate synthetic domain region; that stretch reads IVTERKSVMV…ALYKGLVAAG (383 aa). In terms of domain architecture, ATP-grasp 2 spans 671-861; it reads EAALTELGIP…MANIATKVIL (191 aa). ATP contacts are provided by arginine 707, arginine 746, glutamate 752, glycine 777, valine 778, histidine 779, serine 780, glutamine 820, and glutamate 832. Mg(2+) is bound by residues glutamine 820, glutamate 832, and asparagine 834. Mn(2+) is bound by residues glutamine 820, glutamate 832, and asparagine 834. The 143-residue stretch at 930–1072 folds into the MGS-like domain; the sequence is ISIPTHGSVI…PTTRHEVVHA (143 aa). The segment at 930–1072 is allosteric domain; that stretch reads ISIPTHGSVI…PTTRHEVVHA (143 aa).

It belongs to the CarB family. As to quaternary structure, composed of two chains; the small (or glutamine) chain promotes the hydrolysis of glutamine to ammonia, which is used by the large (or ammonia) chain to synthesize carbamoyl phosphate. Tetramer of heterodimers (alpha,beta)4. It depends on Mg(2+) as a cofactor. Mn(2+) serves as cofactor.

It carries out the reaction hydrogencarbonate + L-glutamine + 2 ATP + H2O = carbamoyl phosphate + L-glutamate + 2 ADP + phosphate + 2 H(+). The enzyme catalyses hydrogencarbonate + NH4(+) + 2 ATP = carbamoyl phosphate + 2 ADP + phosphate + 2 H(+). Its pathway is amino-acid biosynthesis; L-arginine biosynthesis; carbamoyl phosphate from bicarbonate: step 1/1. It functions in the pathway pyrimidine metabolism; UMP biosynthesis via de novo pathway; (S)-dihydroorotate from bicarbonate: step 1/3. Its function is as follows. Large subunit of the glutamine-dependent carbamoyl phosphate synthetase (CPSase). CPSase catalyzes the formation of carbamoyl phosphate from the ammonia moiety of glutamine, carbonate, and phosphate donated by ATP, constituting the first step of 2 biosynthetic pathways, one leading to arginine and/or urea and the other to pyrimidine nucleotides. The large subunit (synthetase) binds the substrates ammonia (free or transferred from glutamine from the small subunit), hydrogencarbonate and ATP and carries out an ATP-coupled ligase reaction, activating hydrogencarbonate by forming carboxy phosphate which reacts with ammonia to form carbamoyl phosphate. This is Carbamoyl phosphate synthase large chain from Bacillus cytotoxicus (strain DSM 22905 / CIP 110041 / 391-98 / NVH 391-98).